A 337-amino-acid polypeptide reads, in one-letter code: Fructose-1,6-bisphosphatase class 1 (337 aa).

Residues E94, D116, L118, and D119 each contribute to the Mg(2+) site. Residues 119-122 (DGSS), N210, and K276 each bind substrate. E282 contacts Mg(2+).

This sequence belongs to the FBPase class 1 family. In terms of assembly, homotetramer. It depends on Mg(2+) as a cofactor.

It localises to the cytoplasm. It catalyses the reaction beta-D-fructose 1,6-bisphosphate + H2O = beta-D-fructose 6-phosphate + phosphate. It participates in carbohydrate biosynthesis; gluconeogenesis. In Burkholderia orbicola (strain MC0-3), this protein is Fructose-1,6-bisphosphatase class 1.